The chain runs to 282 residues: Protoheme IX farnesyltransferase (282 aa).

The next 9 helical transmembrane spans lie at V13–G33, M36–I56, A74–I96, A101–V120, A129–A149, S156–L176, L207–E227, I232–P252, and V261–I281.

The protein belongs to the UbiA prenyltransferase family. Protoheme IX farnesyltransferase subfamily.

The protein resides in the cell inner membrane. The enzyme catalyses heme b + (2E,6E)-farnesyl diphosphate + H2O = Fe(II)-heme o + diphosphate. Its pathway is porphyrin-containing compound metabolism; heme O biosynthesis; heme O from protoheme: step 1/1. Its function is as follows. Converts heme B (protoheme IX) to heme O by substitution of the vinyl group on carbon 2 of heme B porphyrin ring with a hydroxyethyl farnesyl side group. In Oleidesulfovibrio alaskensis (strain ATCC BAA-1058 / DSM 17464 / G20) (Desulfovibrio alaskensis), this protein is Protoheme IX farnesyltransferase.